The following is a 131-amino-acid chain: Guanyl-specific ribonuclease F1 (131 aa).

The signal sequence occupies residues 1-25 (MLFFKSIASLAALVSLAVASPIESR). Glutamine 26 bears the Pyrrolidone carboxylic acid mark. Disulfide bonds link cysteine 31–cysteine 127 and cysteine 49–cysteine 108. The active site involves histidine 65. The active-site Proton acceptor is glutamate 83. Histidine 116 (proton donor) is an active-site residue.

This sequence belongs to the ribonuclease N1/T1 family.

It catalyses the reaction [RNA] containing guanosine + H2O = an [RNA fragment]-3'-guanosine-3'-phosphate + a 5'-hydroxy-ribonucleotide-3'-[RNA fragment].. The sequence is that of Guanyl-specific ribonuclease F1 from Fusarium fujikuroi (Bakanae and foot rot disease fungus).